We begin with the raw amino-acid sequence, 471 residues long: Trigger factor (471 aa).

Positions 169–254 (EDRVTIDYLG…VKEVAKPNEL (86 aa)) constitute a PPIase FKBP-type domain. The interval 435–471 (VSKEELTAEDEDAASEAKPAKKAAAKKKAEEGKSEEA) is disordered. A compositionally biased stretch (basic and acidic residues) spans 461–471 (KKAEEGKSEEA).

Belongs to the FKBP-type PPIase family. Tig subfamily.

It is found in the cytoplasm. The enzyme catalyses [protein]-peptidylproline (omega=180) = [protein]-peptidylproline (omega=0). Functionally, involved in protein export. Acts as a chaperone by maintaining the newly synthesized protein in an open conformation. Functions as a peptidyl-prolyl cis-trans isomerase. This chain is Trigger factor, found in Brucella abortus (strain S19).